Consider the following 359-residue polypeptide: MLYWLGLVLKSHIFLFNVLRYITFRALIAVIVSFLITLVLSPIFMRKVTALNRLYGGYVREDTPETHSKKKFVPSMGGLIIILSLELSSILLMRLDIAQTWIMAFTVFGFAIVGFIDDFVKLKNKKGISARSKMLGQIIVSFVSASLLYFVMHIDTHIYFPFFKSLKLDLGYFYIVFVMLILIATSNAVNLTDGLDGLAIVPAMTTAFALGIISYVAGNSILARYLEIHYVENAGELAIFGMAVVGAGLGFLWFNSFPAQMFMGDVGSLGLGAALGMLAIMSKQELTLIIAGGVFVVEALSVIIQVSVFKITKGKRVFKMAPIHHHFELNGTPEPKIVVRIWIISILLAIFTIATLKLR.

A run of 10 helical transmembrane segments spans residues 24 to 44 (FRAL…SPIF), 72 to 92 (FVPS…SILL), 100 to 120 (TWIM…DDFV), 134 to 154 (MLGQ…VMHI), 170 to 190 (LGYF…NAVN), 197 to 217 (GLAI…SYVA), 234 to 254 (AGEL…FLWF), 261 to 281 (MFMG…LAIM), 289 to 309 (IIAG…VSVF), and 336 to 356 (KIVV…IATL).

Belongs to the glycosyltransferase 4 family. MraY subfamily. It depends on Mg(2+) as a cofactor.

Its subcellular location is the cell inner membrane. It catalyses the reaction UDP-N-acetyl-alpha-D-muramoyl-L-alanyl-gamma-D-glutamyl-meso-2,6-diaminopimeloyl-D-alanyl-D-alanine + di-trans,octa-cis-undecaprenyl phosphate = di-trans,octa-cis-undecaprenyl diphospho-N-acetyl-alpha-D-muramoyl-L-alanyl-D-glutamyl-meso-2,6-diaminopimeloyl-D-alanyl-D-alanine + UMP. It functions in the pathway cell wall biogenesis; peptidoglycan biosynthesis. In terms of biological role, catalyzes the initial step of the lipid cycle reactions in the biosynthesis of the cell wall peptidoglycan: transfers peptidoglycan precursor phospho-MurNAc-pentapeptide from UDP-MurNAc-pentapeptide onto the lipid carrier undecaprenyl phosphate, yielding undecaprenyl-pyrophosphoryl-MurNAc-pentapeptide, known as lipid I. The sequence is that of Phospho-N-acetylmuramoyl-pentapeptide-transferase from Hydrogenobaculum sp. (strain Y04AAS1).